Consider the following 626-residue polypeptide: MAWSVADSRSLYGIRHWGAGYFDVGDSGNIVVRPNVRQRKEIDLYRLVRDLGGKGLDLPLLVRFPDILQDRVTRLCGAFDKAIAEQGYGNRYTAIYPIKVNQQEAVVKSIIATQDVSIGLEAGSKPELMAVLALAPKGCTIVCNGYKDREFIRLALIGERLGHQVFIVIEKESEVDLVIEESRKLEVRPNIGLRVRLSSLASSKWSDTGGEKGKFGLSAGQLISATDKLIAAGLGDCVRLMHFHMGSQIANIADYRLGFREAIRYFAELRALGLPVDHVDVGGGLGVDYDGTHSRNDSSINYDMAEYAHVIVSMLSEFCAENGIPHPRILSESGRAMTAHHAVLLMNVTDVERLPDTVAPIDKAEELSLPLRKLVELANLNDEELVTEIYYRASHCVSEVSEMYAEGRLSLQEKALAEDLHATLCRRLHNQLQASQRSQRQVYDELTDRLADKYFCNFSVFQSLPDTWAIDQVLPIMPVHRLAEQPTRRAVLQDLTCDSDGKLKQYVDQQSIESSMSVHEVKQGDEYLIAVFLVGAYQEILGDMHNLFGDTDSVNVYVREGGELEISGIEEHDTIEDMLRYVHLSPEDLLNRYEAKTRECDLNPEERSLYFAEFCRGLKQSSYLAV.

Lysine 99 is subject to N6-(pyridoxal phosphate)lysine. 279 to 289 (VDVGGGLGVDY) provides a ligand contact to substrate.

It belongs to the Orn/Lys/Arg decarboxylase class-II family. SpeA subfamily. It depends on Mg(2+) as a cofactor. Pyridoxal 5'-phosphate serves as cofactor.

The enzyme catalyses L-arginine + H(+) = agmatine + CO2. It participates in amine and polyamine biosynthesis; agmatine biosynthesis; agmatine from L-arginine: step 1/1. Functionally, catalyzes the biosynthesis of agmatine from arginine. The sequence is that of Biosynthetic arginine decarboxylase from Chromobacterium violaceum (strain ATCC 12472 / DSM 30191 / JCM 1249 / CCUG 213 / NBRC 12614 / NCIMB 9131 / NCTC 9757 / MK).